The primary structure comprises 307 residues: Barttin (307 aa).

The Cytoplasmic segment spans residues 1–5; that stretch reads MADEK. Residues 1-72 form a regulates channel membrane trafficking and anion conductance region; the sequence is MADEKTFRIG…VPADSDFQGI (72 aa). A helical membrane pass occupies residues 6-26; the sequence is TFRIGFIVLGLFLLSLGTFLM. The Extracellular segment spans residues 27–32; the sequence is SHDRPQ. A helical transmembrane segment spans residues 33 to 53; the sequence is VYGTFYAMGSVMVIGGVIWSM. Residues C54 and C56 are each lipidated (S-palmitoyl cysteine). The Cytoplasmic segment spans residues 54-307; sequence CQCYPKITFV…ELGFEPDIQG (254 aa). A phosphoserine mark is found at S79 and S107. 2 disordered regions span residues 135–154 and 161–224; these read TGAS…WMEA and GSDE…RGPL. The segment covering 161–171 has biased composition (basic and acidic residues); it reads GSDENEGEKSH. Residue S162 is modified to Phosphoserine. Residues 172–183 show a composition bias toward low complexity; the sequence is SQSSPSVGPQGS. The segment covering 198-207 has biased composition (polar residues); the sequence is SEGSSLQPSP. A phosphoserine mark is found at S228 and S289. The segment at 255 to 307 is disordered; that stretch reads RKQQWSLRMKGETVQARAEEPEQEEEDLYYGLPDSPGNPLPDKELGFEPDIQG.

As to quaternary structure, interacts with CLCNK channels. Forms probably heteromers with CLCNKA in the thin ascending limb of Henle and with CLCNKB in the thick ascending limb and more distal segments. Palmitoylation is necessary for activation of plasma membrane-inserted CLC-K/barttin channels. Expression is evident in inner and outer stripes of the outer medulla of the kidney, most probably representing thin limbs of Henle's loop together with some collecting duct coursing through the outer stripe. In situ hybridization in fetal kidney at 18.5 dpc revealed a clear continuity between hybridization signals from the thin limb of Henle's loop and the distal convoluted tubule, suggesting that part of the expression pattern may result from expression in the thick ascending limb of Henle's loop. In addition, strong signals are present in a subset of cortical tubules, representing distal convoluted tubules or cortical collecting duct. Strong expression is also observed in the inner medulla of the kidney. This expression does not extend all the way to the tip of the papilla. Thus this signal most probably represents cells of the thin ascending limbs. In the inner ear, strong and exclusive expression is detected in marginal cells of the stria vascularis. In addition to cochlear signal, expression is observed in dark cells localized at the base of the crista ampullaris of the vestibular organ.

It localises to the basolateral cell membrane. Regulatory subunit of anion-selective CLCNKA:BSND and CLCNKB:BSND heteromeric channels involved in basolateral chloride conductance along the nephron to achieve urine concentration and maintain systemic acid-base homeostasis, and in the stria vascularis of the inner ear to establish the endocochlear potential necessary for normal hearing. Most likely acts as a chaperone that allosterically regulates proper sorting of CLCNKA:BSND and CLCNKB:BSND channels at the basolateral plasma membrane domain and functional switch to ion conducting state. Mediates constitutive opening of channel common gates. This is Barttin from Mus musculus (Mouse).